The chain runs to 336 residues: MREEQPHLATTWAARGWVEEEGIGSATLGRLVRAWPRRAAVVNKADILDEWADYDTLVPDYPLEIVPFAEHPLFLAAEPHQRQRVLTGMWIGYNERVIATEQLIAEPAFDLVMHGVFPGSDDPLIRKSVQQAIVDESFHTYMHMLAIDRTRELRKISERPPQPELVTYRRLRRVLADMPEQWERDIAVLVWGAVAETCINALLALLARDATIQPMHSLITTLHLRDETAHGSIVVEVVRELYARMNEQQRRALVRCLPIALEAFAEQDLSALLLELNAAGIRGAEEIVGDLRSTAGGTRLVRDFSGARKMVEQLGLDDAVDFDFPERPDWSPHTPR.

Tyr93 lines the 4-nitrobenzoate pocket. Residues Glu101, Glu136, His139, and Glu196 each coordinate Fe cation. A 4-nitrobenzoate-binding site is contributed by Asn200. Positions 223, 227, and 230 each coordinate Fe cation.

It belongs to the AurF N-oxygenase family. Homodimer. It depends on Fe(2+) as a cofactor.

The catalysed reaction is 4-aminobenzoate + AH2 + 2 O2 = 4-nitrobenzoate + A + 2 H2O. It functions in the pathway antibiotic biosynthesis. In terms of biological role, involved in the biosynthesis of the polyketide antibiotic aureothin. Catalyzes the oxidation of p-aminobenzoate (pABA) to p-nitrobenzoate (pNBA), an unusual polyketide synthase starter unit. Reaction mechanism involves the generation of a peroxodiiron(III/III) intermediate, which effects the initial oxidation of p-aminobenzoate to p-hydroxylaminobenzoate (Ar-NHOH). Ar-NHOH is then probably directly converted to the fully oxidized p-nitrobenzoate via a four-electron N-oxidation, bypassing the formation of a nitroso compound. The chain is 4-aminobenzoate N-oxygenase from Streptomyces thioluteus.